The chain runs to 290 residues: MRAPLLLESRDYLLSEQMPVAVTNRYPQETFVEHTHQFCEIVIVWRGNGLHVLNDHPYRITCGDVFYIQAADHHSYESVHDLVLDNIIYCPERLHLNAQWHKLLPPLGPEQNQGYWRLTTQGMAQARPIIQQLAQESRKTDSWSIQLTEVLLLQLAIVLKRHRYRAEQAHLLPDGEQLDLIMSALQQSLGAYFDMANFCHKNQLVERSLKQLFRQQTGMSISHYLRQIRLCHAKCLLRGSEHRISDIAARCGFEDSNYFSAVFTREAGMTPRDYRQRFIRSPVLPTKNEP.

Residues 179 to 277 form the HTH araC/xylS-type domain; sequence DLIMSALQQS…GMTPRDYRQR (99 aa). 2 consecutive DNA-binding regions (H-T-H motif) follow at residues 196 to 217 and 244 to 267; these read ANFC…RQQT and ISDI…TREA.

In terms of assembly, binds DNA as a dimer.

The protein localises to the cytoplasm. In terms of biological role, activates expression of the rhaSR operon in response to L-rhamnose. In Yersinia pseudotuberculosis serotype O:3 (strain YPIII), this protein is HTH-type transcriptional activator RhaR.